We begin with the raw amino-acid sequence, 408 residues long: Na(+)/H(+) antiporter NhaA 2 (408 aa).

11 consecutive transmembrane segments (helical) span residues 36–56, 79–99, 115–135, 145–165, 174–194, 197–217, 225–245, 281–301, 310–330, 348–368, and 381–401; these read GILL…GLGV, ILLW…GLEI, ALPV…YFLF, GWGI…SLLG, IFLA…IAVF, SELH…LMVF, LFFY…SGIH, FIIM…SEML, LGII…MSWL, VLGL…IALL, and FAIL…LSSY.

This sequence belongs to the NhaA Na(+)/H(+) (TC 2.A.33) antiporter family.

It localises to the cell inner membrane. The enzyme catalyses Na(+)(in) + 2 H(+)(out) = Na(+)(out) + 2 H(+)(in). Its function is as follows. Na(+)/H(+) antiporter that extrudes sodium in exchange for external protons. The polypeptide is Na(+)/H(+) antiporter NhaA 2 (Flavobacterium johnsoniae (strain ATCC 17061 / DSM 2064 / JCM 8514 / BCRC 14874 / CCUG 350202 / NBRC 14942 / NCIMB 11054 / UW101) (Cytophaga johnsonae)).